The sequence spans 237 residues: Uridylate kinase (237 aa).

10-13 (KLSG) contacts ATP. G51 contributes to the UMP binding site. G52 and R56 together coordinate ATP. UMP is bound by residues D71 and 133 to 140 (TGNPCFTT). 3 residues coordinate ATP: T160, Y166, and D169.

This sequence belongs to the UMP kinase family. Homohexamer.

It localises to the cytoplasm. The enzyme catalyses UMP + ATP = UDP + ADP. It functions in the pathway pyrimidine metabolism; CTP biosynthesis via de novo pathway; UDP from UMP (UMPK route): step 1/1. Inhibited by UTP. Its function is as follows. Catalyzes the reversible phosphorylation of UMP to UDP. The polypeptide is Uridylate kinase (Vesicomyosocius okutanii subsp. Calyptogena okutanii (strain HA)).